Consider the following 93-residue polypeptide: YcgL domain-containing protein PSHAb0508 (93 aa).

The YcgL domain maps to 1-85 (MLTAVYKSKK…PQENLLSQLR (85 aa)).

The polypeptide is YcgL domain-containing protein PSHAb0508 (Pseudoalteromonas translucida (strain TAC 125)).